The following is a 404-amino-acid chain: Glycosylated lysosomal membrane protein (404 aa).

Positions 1-26 (MSGYEKPSRGWGFCALSPVLLSLLMA) are cleaved as a signal peptide. At 27-370 (APLGLLGEET…VDALSPLVLG (344 aa)) the chain is on the lumenal side. 5 N-linked (GlcNAc...) asparagine glycosylation sites follow: N63, N132, N157, N185, and N228. A helical membrane pass occupies residues 371–391 (IMAVALGAPALMLLAGGLFLL). Residues 392-404 (LGRKRDSEYQSIN) are Cytoplasmic-facing. Positions 400–404 (YQSIN) match the Lysosomal targeting motif motif.

This sequence belongs to the GLMP family. In terms of assembly, interacts (via lumenal domain) with lysosomal protein MFSD1; the interaction starts while both proteins are still in the endoplasmic reticulum and is required for stabilization of MFSD1 in lysosomes but has no direct effect on its targeting to lysosomes or transporter activity. Highly N-glycosylated. N-glycosylation is essential for GLMP stability and for MFSD1 lysosomal localization.

The protein resides in the lysosome membrane. In terms of biological role, required to protect lysosomal transporter MFSD1 from lysosomal proteolysis and for MFSD1 lysosomal localization. This chain is Glycosylated lysosomal membrane protein, found in Bos taurus (Bovine).